Here is a 447-residue protein sequence, read N- to C-terminus: M-phase inducer phosphatase 3 (447 aa).

Ser2 carries the N-acetylserine modification. A phosphoserine mark is found at Ser20, Ser38, Ser56, Ser60, and Ser63. Phosphothreonine; by CDK1 is present on Thr66. The segment covering 81 to 90 (MSASPLTTSA) has biased composition (polar residues). A disordered region spans residues 81 to 109 (MSASPLTTSADLEDNGSLDSSGPLDRQLT). Ser128 carries the phosphoserine modification. Thr129 bears the Phosphothreonine mark. The residue at position 192 (Ser192) is a Phosphoserine; by CDK1. A phosphoserine; by PLK3 mark is found at Ser213 and Ser220. The 108-residue stretch at 294–401 (VIERFYIIDC…FFPEYMELCD (108 aa)) folds into the Rhodanese domain. Cys350 is an active-site residue. Ser445 carries the post-translational modification Phosphoserine.

Belongs to the MPI phosphatase family. Interacts with MAPK14 and 14-3-3 proteins. When phosphorylated on Ser-128 and/or Thr-129, interacts with PLK1. Interacts with MARK3/C-TAK1. Post-translationally, phosphorylated by PLK4. Phosphorylated by PLK1, leading to activate the phosphatase activity. Phosphorylated by CHEK1 and MAPKAPK2. This phosphorylation creates a binding site for 14-3-3 protein and inhibits the phosphatase activity. Phosphorylation by PLK3 at Ser-213 promotes nuclear translocation. Ser-220 is a minor phosphorylation site. Phosphorylation by CDK1 occurs at G2 and G2-M transition and leads to increased activity. Spleen and thymus.

Its subcellular location is the nucleus. The catalysed reaction is O-phospho-L-tyrosyl-[protein] + H2O = L-tyrosyl-[protein] + phosphate. Its function is as follows. Functions as a dosage-dependent inducer in mitotic control. Tyrosine protein phosphatase required for progression of the cell cycle. When phosphorylated, highly effective in activating G2 cells into prophase. Directly dephosphorylates CDK1 and activates its kinase activity. This is M-phase inducer phosphatase 3 (Cdc25c) from Mus musculus (Mouse).